Here is a 531-residue protein sequence, read N- to C-terminus: Aspartate--tRNA ligase, cytoplasmic (531 aa).

Positions 1-45 (MADAAEGEQPKLSKKELNKLARKAKKDEKAGEKGGNQQQAAAMDQ) are disordered. The span at 8–32 (EQPKLSKKELNKLARKAKKDEKAGE) shows a compositional bias: basic and acidic residues. Position 259 (Glu259) interacts with L-aspartate. Residues 281–284 (QLYK) form an aspartate region. Arg303 contributes to the L-aspartate binding site. ATP-binding positions include 303-305 (RAE), 311-313 (RHM), and Glu454. 2 residues coordinate L-aspartate: Ser457 and Arg461. ATP is bound at residue 502–505 (GLER).

This sequence belongs to the class-II aminoacyl-tRNA synthetase family. Type 2 subfamily. Homodimer.

The protein resides in the cytoplasm. It carries out the reaction tRNA(Asp) + L-aspartate + ATP = L-aspartyl-tRNA(Asp) + AMP + diphosphate. This chain is Aspartate--tRNA ligase, cytoplasmic, found in Caenorhabditis elegans.